Reading from the N-terminus, the 169-residue chain is Disulfide bond formation protein B (169 aa).

At 1–8 (MRLSVRWV) the chain is on the cytoplasmic side. Residues 9–25 (FFLGFFLCALMLAIAGY) form a helical membrane-spanning segment. Topologically, residues 26–43 (FQFVENLEPCPLCILSRV) are periplasmic. C35 and C38 are joined by a disulfide. Residues 44–60 (AVLAIGGVFLVAALHNP) traverse the membrane as a helical segment. Topologically, residues 61–67 (KSWGIKV) are cytoplasmic. The helical transmembrane segment at 68 to 84 (YALLGFVVTLIGIGITG) threads the bilayer. At 85 to 141 (RHVWLQSLPADQVPACGPGLNFMLDNFPLTETLELVFRGSGECAEVQWSFLGLTIPG) the chain is on the periplasmic side. The cysteines at positions 100 and 127 are disulfide-linked. A helical transmembrane segment spans residues 142–160 (WTLVAFLFLGVISLWQMGR). Residues 161–169 (TGGGAGKLT) lie on the Cytoplasmic side of the membrane.

This sequence belongs to the DsbB family.

It is found in the cell inner membrane. Required for disulfide bond formation in some periplasmic proteins. Acts by oxidizing the DsbA protein. This is Disulfide bond formation protein B from Nitrosococcus oceani (strain ATCC 19707 / BCRC 17464 / JCM 30415 / NCIMB 11848 / C-107).